A 111-amino-acid polypeptide reads, in one-letter code: Rubredoxin (111 aa).

Residues 11-62 (LDRFECRSCGYVYEPEKGDSKHDIAPETPFAELPINWRCPVCTAKKAAFSNI) enclose the Rubredoxin-like domain. Cys16, Cys19, Cys49, and Cys52 together coordinate Fe cation.

It belongs to the rubredoxin family. It depends on Fe(3+) as a cofactor.

Functionally, rubredoxin is a small nonheme, iron protein lacking acid-labile sulfide. Its single Fe, chelated to 4 Cys, functions as an electron acceptor and may also stabilize the conformation of the molecule. Could be involved in hydrogenase-linked redox processes. This chain is Rubredoxin (rub), found in Trichormus variabilis (strain ATCC 29413 / PCC 7937) (Anabaena variabilis).